The following is a 99-amino-acid chain: DNA-binding protein Fis (99 aa).

The segment at 1–25 is disordered; the sequence is MFEQKISSEALTTTTSIPATGQITQ. A DNA-binding region (H-T-H motif) is located at residues 75–94; the sequence is QTRAATMLGINRGTLRKKLK.

It belongs to the transcriptional regulatory Fis family. As to quaternary structure, homodimer.

Its function is as follows. Activates ribosomal RNA transcription. Plays a direct role in upstream activation of rRNA promoters. The chain is DNA-binding protein Fis from Psychromonas ingrahamii (strain DSM 17664 / CCUG 51855 / 37).